The primary structure comprises 185 residues: Probable chorismate pyruvate-lyase (185 aa).

Substrate is bound by residues arginine 75, leucine 113, and glutamate 174.

Belongs to the UbiC family.

Its subcellular location is the cytoplasm. The enzyme catalyses chorismate = 4-hydroxybenzoate + pyruvate. It participates in cofactor biosynthesis; ubiquinone biosynthesis. Functionally, removes the pyruvyl group from chorismate, with concomitant aromatization of the ring, to provide 4-hydroxybenzoate (4HB) for the ubiquinone pathway. The polypeptide is Probable chorismate pyruvate-lyase (Aromatoleum aromaticum (strain DSM 19018 / LMG 30748 / EbN1) (Azoarcus sp. (strain EbN1))).